A 219-amino-acid chain; its full sequence is Probable nicotinate-nucleotide adenylyltransferase (219 aa).

It belongs to the NadD family.

It carries out the reaction nicotinate beta-D-ribonucleotide + ATP + H(+) = deamido-NAD(+) + diphosphate. The protein operates within cofactor biosynthesis; NAD(+) biosynthesis; deamido-NAD(+) from nicotinate D-ribonucleotide: step 1/1. Its function is as follows. Catalyzes the reversible adenylation of nicotinate mononucleotide (NaMN) to nicotinic acid adenine dinucleotide (NaAD). The sequence is that of Probable nicotinate-nucleotide adenylyltransferase from Pseudomonas entomophila (strain L48).